The sequence spans 692 residues: Elongation factor G (692 aa).

The tr-type G domain maps to 8 to 282 (EKTRNIGIMA…GVVDYLPSPV (275 aa)). GTP contacts are provided by residues 17–24 (AHIDAGKT), 81–85 (DTPGH), and 135–138 (NKMD).

This sequence belongs to the TRAFAC class translation factor GTPase superfamily. Classic translation factor GTPase family. EF-G/EF-2 subfamily.

It localises to the cytoplasm. Its function is as follows. Catalyzes the GTP-dependent ribosomal translocation step during translation elongation. During this step, the ribosome changes from the pre-translocational (PRE) to the post-translocational (POST) state as the newly formed A-site-bound peptidyl-tRNA and P-site-bound deacylated tRNA move to the P and E sites, respectively. Catalyzes the coordinated movement of the two tRNA molecules, the mRNA and conformational changes in the ribosome. This is Elongation factor G from Geobacillus kaustophilus (strain HTA426).